A 155-amino-acid polypeptide reads, in one-letter code: S-ribosylhomocysteine lyase (155 aa).

Fe cation-binding residues include His-54, His-58, and Cys-122.

This sequence belongs to the LuxS family. Homodimer. It depends on Fe cation as a cofactor.

The catalysed reaction is S-(5-deoxy-D-ribos-5-yl)-L-homocysteine = (S)-4,5-dihydroxypentane-2,3-dione + L-homocysteine. Its function is as follows. Involved in the synthesis of autoinducer 2 (AI-2) which is secreted by bacteria and is used to communicate both the cell density and the metabolic potential of the environment. The regulation of gene expression in response to changes in cell density is called quorum sensing. Catalyzes the transformation of S-ribosylhomocysteine (RHC) to homocysteine (HC) and 4,5-dihydroxy-2,3-pentadione (DPD). The protein is S-ribosylhomocysteine lyase of Deinococcus deserti (strain DSM 17065 / CIP 109153 / LMG 22923 / VCD115).